We begin with the raw amino-acid sequence, 303 residues long: Protoheme IX farnesyltransferase (303 aa).

9 helical membrane passes run 17 to 37 (GVVM…TEPA), 42 to 62 (LATF…SAAI), 91 to 111 (AAIT…YFLV), 114 to 134 (LTAW…TLYL), 142 to 162 (IVIG…AVTG), 168 to 188 (AWLL…ALAI), 208 to 228 (IPFT…CTLL), 231 to 251 (LTGM…LVFL), and 270 to 290 (FGYS…DHYL).

This sequence belongs to the UbiA prenyltransferase family. Protoheme IX farnesyltransferase subfamily.

The protein resides in the cell inner membrane. It carries out the reaction heme b + (2E,6E)-farnesyl diphosphate + H2O = Fe(II)-heme o + diphosphate. It participates in porphyrin-containing compound metabolism; heme O biosynthesis; heme O from protoheme: step 1/1. Functionally, converts heme B (protoheme IX) to heme O by substitution of the vinyl group on carbon 2 of heme B porphyrin ring with a hydroxyethyl farnesyl side group. The chain is Protoheme IX farnesyltransferase from Alcanivorax borkumensis (strain ATCC 700651 / DSM 11573 / NCIMB 13689 / SK2).